The chain runs to 511 residues: Vesicular acetylcholine transporter (511 aa).

The Cytoplasmic segment spans residues Met1–Lys36. Residues Ile37–Val57 traverse the membrane as a helical segment. Topologically, residues Pro58 to Gly108 are lumenal, vesicle. N-linked (GlcNAc...) asparagine glycans are attached at residues Asn80, Asn83, and Asn88. Residues Val109–Ile129 traverse the membrane as a helical segment. The Cytoplasmic portion of the chain corresponds to Asp130–Asp135. The helical transmembrane segment at Ile136–Glu156 threads the bilayer. Over Ser157–Arg165 the chain is Lumenal, vesicle. Residues Ser166–Lys186 traverse the membrane as a helical segment. Over Tyr187–Leu197 the chain is Cytoplasmic. Residues Gly198–Leu218 traverse the membrane as a helical segment. At Tyr219–Trp225 the chain is on the lumenal, vesicle side. The helical transmembrane segment at Val226–Val246 threads the bilayer. The Cytoplasmic portion of the chain corresponds to Thr247–Met267. A helical membrane pass occupies residues Ile268–Phe288. Over Leu289–Trp306 the chain is Lumenal, vesicle. The N-linked (GlcNAc...) asparagine glycan is linked to Asn302. Residues Gln307–Val327 traverse the membrane as a helical segment. At Lys328–Gln337 the chain is on the cytoplasmic side. The helical transmembrane segment at Trp338 to Cys358 threads the bilayer. The Lumenal, vesicle portion of the chain corresponds to Arg359 to Glu363. The helical transmembrane segment at Leu364–Pro384 threads the bilayer. Over Thr385–Ser400 the chain is Cytoplasmic. Residues Val401–Gly421 form a helical membrane-spanning segment. Over Gln422–Gly428 the chain is Lumenal, vesicle. Residues Phe429–Phe449 form a helical membrane-spanning segment. The Cytoplasmic portion of the chain corresponds to Leu450–Glu511. A disordered region spans residues Ala486 to Glu511.

This sequence belongs to the major facilitator superfamily. Vesicular transporter family. High expression in the electric lobe of the brain.

It localises to the membrane. In terms of biological role, involved in acetylcholine transport into synaptic vesicles. This chain is Vesicular acetylcholine transporter, found in Torpedo torpedo (Common torpedo).